The chain runs to 293 residues: MASITLTPSEKDIQAFLEHYQTSLAPSKNPYIRYFLKLPQATVSIYTSGKILLQGEGAEKYASFFGYQAVEQTSGQNLPLIGTDEVGNGSYFGGLAVVAAFVTPDQHDFLRKLGVGDSKTLTDQKIRQITPILKEKIQHQALLLSPSKYNEVIGDRYNAVSVKVALHNQAIYLLLQKGVQPEKIVIDAFTSAKNYDKYLAQEANRFSNPISLEEKAEGKYLSVAVSSVIARDLFLENLENLGRELGYQLPSGAGTASDKVASQILQAYGMQGLSFCAKLHFKNTEKAKKRLER.

Residues 78 to 293 (LPLIGTDEVG…TEKAKKRLER (216 aa)) form the RNase H type-2 domain. A divalent metal cation contacts are provided by Asp84, Glu85, and Asp187.

Belongs to the RNase HII family. RnhC subfamily. Mn(2+) serves as cofactor. Requires Mg(2+) as cofactor.

Its subcellular location is the cytoplasm. It catalyses the reaction Endonucleolytic cleavage to 5'-phosphomonoester.. Functionally, endonuclease that specifically degrades the RNA of RNA-DNA hybrids. The chain is Ribonuclease HIII (rnhC) from Streptococcus pneumoniae serotype 4 (strain ATCC BAA-334 / TIGR4).